Consider the following 116-residue polypeptide: Large ribosomal subunit protein bL19 (116 aa).

The protein belongs to the bacterial ribosomal protein bL19 family.

In terms of biological role, this protein is located at the 30S-50S ribosomal subunit interface and may play a role in the structure and function of the aminoacyl-tRNA binding site. This is Large ribosomal subunit protein bL19 from Actinobacillus pleuropneumoniae serotype 5b (strain L20).